The sequence spans 78 residues: Polcalcin Phl p 7 (78 aa).

2 EF-hand domains span residues 1–35 and 35–70; these read MADD…LGST and TSAD…NPGL. Residues aspartate 13, asparagine 15, aspartate 17, lysine 19, glutamate 24, aspartate 48, aspartate 50, aspartate 52, and glutamate 59 each contribute to the Ca(2+) site.

As to quaternary structure, monomer. Specifically expressed in pollen.

Functionally, may be involved in the regulation of pollen-tube growth. This Phleum pratense (Common timothy) protein is Polcalcin Phl p 7.